Here is a 178-residue protein sequence, read N- to C-terminus: 6,7-dimethyl-8-ribityllumazine synthase (178 aa).

5-amino-6-(D-ribitylamino)uracil-binding positions include Y27, 58 to 60 (SLE), and 82 to 84 (CVI). 87 to 88 (AT) is a binding site for (2S)-2-hydroxy-3-oxobutyl phosphate. H90 acts as the Proton donor in catalysis. N114 provides a ligand contact to 5-amino-6-(D-ribitylamino)uracil. Position 128 (R128) interacts with (2S)-2-hydroxy-3-oxobutyl phosphate.

The protein belongs to the DMRL synthase family.

It catalyses the reaction (2S)-2-hydroxy-3-oxobutyl phosphate + 5-amino-6-(D-ribitylamino)uracil = 6,7-dimethyl-8-(1-D-ribityl)lumazine + phosphate + 2 H2O + H(+). It participates in cofactor biosynthesis; riboflavin biosynthesis; riboflavin from 2-hydroxy-3-oxobutyl phosphate and 5-amino-6-(D-ribitylamino)uracil: step 1/2. Functionally, catalyzes the formation of 6,7-dimethyl-8-ribityllumazine by condensation of 5-amino-6-(D-ribitylamino)uracil with 3,4-dihydroxy-2-butanone 4-phosphate. This is the penultimate step in the biosynthesis of riboflavin. This chain is 6,7-dimethyl-8-ribityllumazine synthase, found in Jannaschia sp. (strain CCS1).